We begin with the raw amino-acid sequence, 332 residues long: Probable farnesyl diphosphate synthase (332 aa).

The isopentenyl diphosphate site is built by Lys75, Arg78, and His107. Mg(2+) is bound by residues Asp114 and Asp120. Arg125 is a binding site for (2E)-geranyl diphosphate. An isopentenyl diphosphate-binding site is contributed by Arg126. 3 residues coordinate (2E)-geranyl diphosphate: Lys208, Gln250, and Lys267.

It belongs to the FPP/GGPP synthase family. The cofactor is Mg(2+).

It is found in the cytoplasm. It catalyses the reaction isopentenyl diphosphate + (2E)-geranyl diphosphate = (2E,6E)-farnesyl diphosphate + diphosphate. The chain is Probable farnesyl diphosphate synthase from Sinorhizobium fredii (strain NBRC 101917 / NGR234).